The following is a 141-amino-acid chain: Hemoglobin subunit alpha-D (141 aa).

In terms of domain architecture, Globin spans 1–141; sequence VLTGEDKKHV…VAAVLAEKYR (141 aa). Heme b contacts are provided by His-58 and His-87.

Belongs to the globin family. In terms of assembly, heterotetramer of two alpha-D chains and two beta chains. Red blood cells.

Its function is as follows. Involved in oxygen transport from the lung to the various peripheral tissues. In Turdus merula (Common blackbird), this protein is Hemoglobin subunit alpha-D (HBAD).